A 324-amino-acid polypeptide reads, in one-letter code: MNSLVALVLLGQIIGSTVSFQLGPNMDCNTKGTKDWADIGVHYINEHKLHGYKQALNVIKIFRLLPSDGRSVIFHFNLNLLETECHVLDSTPVENCTVRPQHNHAVEMDCNVRIIHDITTFEDEVFVKCSSTPGSVENILRDCPKCPILLSPNDPHVVDSVEYVLNKHNEKLSGHIYEVLEISRGQHKYEPEAYYLEFVIVEINCTAQEAHDDYHQCHPYTAGEDHIAFCRSTVFRSHASLEKPKDEKFESDCVILDVKEGHAHSHLIEHHVGKYSTSPGYNSTDECVVECPVAFVNKEVPTDISDHNTPPVKGCPGRVLHFQL.

The N-terminal stretch at 1-19 is a signal peptide; sequence MNSLVALVLLGQIIGSTVS. Cystatin fetuin-A-type domains follow at residues 21-130 and 141-254; these read QLGP…VKCS and RDCP…SDCV. Cystine bridges form between Cys28–Cys315, Cys85–Cys96, Cys110–Cys129, Cys143–Cys146, Cys205–Cys217, and Cys230–Cys253. Asn95 carries N-linked (GlcNAc...) asparagine glycosylation. Asn204 carries an N-linked (GlcNAc...) asparagine glycan. Asn282 carries N-linked (GlcNAc...) asparagine glycosylation.

Belongs to the fetuin family. Homodimer. As to expression, expressed by the liver.

It is found in the secreted. In terms of biological role, may not have antihemorrhagic activity. The chain is HSF-like protein from Protobothrops flavoviridis (Habu).